A 380-amino-acid polypeptide reads, in one-letter code: Cytochrome b (380 aa).

The next 4 helical transmembrane spans lie at phenylalanine 34–methionine 54, tryptophan 78–isoleucine 99, tryptophan 114–leucine 134, and phenylalanine 179–threonine 199. Heme b-binding residues include histidine 84 and histidine 98. Residues histidine 183 and histidine 197 each coordinate heme b. An a ubiquinone-binding site is contributed by histidine 202. 4 helical membrane passes run serine 227–serine 247, leucine 289–histidine 309, leucine 321–serine 341, and phenylalanine 348–proline 368.

This sequence belongs to the cytochrome b family. As to quaternary structure, the cytochrome bc1 complex contains 11 subunits: 3 respiratory subunits (MT-CYB, CYC1 and UQCRFS1), 2 core proteins (UQCRC1 and UQCRC2) and 6 low-molecular weight proteins (UQCRH/QCR6, UQCRB/QCR7, UQCRQ/QCR8, UQCR10/QCR9, UQCR11/QCR10 and a cleavage product of UQCRFS1). This cytochrome bc1 complex then forms a dimer. The cofactor is heme b.

It localises to the mitochondrion inner membrane. Component of the ubiquinol-cytochrome c reductase complex (complex III or cytochrome b-c1 complex) that is part of the mitochondrial respiratory chain. The b-c1 complex mediates electron transfer from ubiquinol to cytochrome c. Contributes to the generation of a proton gradient across the mitochondrial membrane that is then used for ATP synthesis. The sequence is that of Cytochrome b (MT-CYB) from Caracara plancus (Southern caracara).